A 281-amino-acid chain; its full sequence is MLNTLEPQPCETDALSPRLQRSTGSARVVMRRKADGTTALADLAQQGCAKAMLPRVHAPVPEVVFLNTAGGVTGGDSLSYRLDLEAGAQATGATQTAERTYRSSAGTGEMRVHLTLGSGARLDWLPQETILFDGSATRRCTEVEMAADATLLWCETLVFGRAAMGEALSRFAFRDDRQVRRDGKLVLWEPLTLDATHLAPRACLGGARAIATVAFLAPDAEAARDTVRRLAPEGVDWAVSAWDGKLVLRAFAPDAQPLKHALAQVLHVLREGASLPRVWQL.

The interval 1-25 (MLNTLEPQPCETDALSPRLQRSTGS) is disordered.

The protein belongs to the UreD family. In terms of assembly, ureD, UreF and UreG form a complex that acts as a GTP-hydrolysis-dependent molecular chaperone, activating the urease apoprotein by helping to assemble the nickel containing metallocenter of UreC. The UreE protein probably delivers the nickel.

It localises to the cytoplasm. In terms of biological role, required for maturation of urease via the functional incorporation of the urease nickel metallocenter. The protein is Urease accessory protein UreD of Dinoroseobacter shibae (strain DSM 16493 / NCIMB 14021 / DFL 12).